A 41-amino-acid polypeptide reads, in one-letter code: Photosystem I reaction center subunit IX (41 aa).

A helical membrane pass occupies residues 7–27 (YLSTAPVLATLWFGLLAGILI).

The protein belongs to the PsaJ family.

It is found in the plastid. It localises to the chloroplast thylakoid membrane. May help in the organization of the PsaE and PsaF subunits. This chain is Photosystem I reaction center subunit IX, found in Chara vulgaris (Common stonewort).